We begin with the raw amino-acid sequence, 174 residues long: NADH-ubiquinone oxidoreductase chain 6 (174 aa).

A run of 6 helical transmembrane segments spans residues 1–21 (MTYALFLLSVSLVMGFVGFSS), 24–44 (SPIYGGLVLIVSGVVGCAIIL), 47–67 (GGGYMGLMVFLIYLGGMMVVF), 86–106 (VEVLVSVLVGLAMEVGLVLWV), 111–131 (GMVVVVNFNSVGSWMIYEGEG), and 151–171 (WLVVVTGWTLFVGVYIVIEIA).

This sequence belongs to the complex I subunit 6 family. As to quaternary structure, core subunit of respiratory chain NADH dehydrogenase (Complex I) which is composed of 45 different subunits.

The protein localises to the mitochondrion inner membrane. It carries out the reaction a ubiquinone + NADH + 5 H(+)(in) = a ubiquinol + NAD(+) + 4 H(+)(out). In terms of biological role, core subunit of the mitochondrial membrane respiratory chain NADH dehydrogenase (Complex I) which catalyzes electron transfer from NADH through the respiratory chain, using ubiquinone as an electron acceptor. Essential for the catalytic activity and assembly of complex I. In Pan troglodytes (Chimpanzee), this protein is NADH-ubiquinone oxidoreductase chain 6 (MT-ND6).